We begin with the raw amino-acid sequence, 297 residues long: Taste receptor type 2 member 4 (297 aa).

Over 1 to 11 the chain is Extracellular; that stretch reads MLWELYVFVFA. The chain crosses the membrane as a helical span at residues 12–32; the sequence is ASVFLNFVGIIANLFIIVIII. Over 33-46 the chain is Cytoplasmic; the sequence is KTWVNSRRIASPDR. Residues 47–67 traverse the membrane as a helical segment; that stretch reads ILFSLAITRFLTLGLFLLNSV. Residues 68–80 lie on the Extracellular side of the membrane; it reads YIATNTGRSVYFS. A helical transmembrane segment spans residues 81–101; sequence TFFLLCWKFLDANSLWLVTIL. Topologically, residues 102-128 are cytoplasmic; that stretch reads NSLYCVKITNFQHPVFLLLKRTISMKT. The helical transmembrane segment at 129-149 threads the bilayer; the sequence is TSLLLACLLISALTTLLYYML. Residues 150 to 171 are Extracellular-facing; it reads SQISRFPEHIIGRNDTSFDLSD. The N-linked (GlcNAc...) asparagine glycan is linked to Asn-163. A helical transmembrane segment spans residues 172-192; that stretch reads GILTLVASLVLNSLLQFMLNV. Residues 193 to 229 are Cytoplasmic-facing; sequence TFASLLIHSLRRHIQKMQRNRTSFWNPQTEAHMGAMR. A helical transmembrane segment spans residues 230-250; the sequence is LMICFLVLYIPYSIATLLYLP. Residues 251 to 260 lie on the Extracellular side of the membrane; the sequence is SYMRKNLRAQ. The chain crosses the membrane as a helical span at residues 261 to 281; it reads AICMIITAAYPPGHSVLLIIT. At 282-297 the chain is on the cytoplasmic side; the sequence is HHKLKAKAKKIFCFYK.

Belongs to the G-protein coupled receptor T2R family. Expressed in subsets of taste receptor cells of the tongue and palate epithelium and exclusively in gustducin-positive cells. Expressed in 15% taste bud cells in circumvallate and foliate papillae but only in 2% in fungiform papillae.

The protein localises to the membrane. The protein resides in the cell projection. It localises to the cilium membrane. Its function is as follows. Gustducin-coupled receptor for denatonium and N(6)-propyl-2-thiouracil implicated in the perception of bitter compounds in the oral cavity and the gastrointestinal tract. Signals through PLCB2 and the calcium-regulated cation channel TRPM5. In airway epithelial cells, binding of denatonium increases the intracellular calcium ion concentration and stimulates ciliary beat frequency. This Mus musculus (Mouse) protein is Taste receptor type 2 member 4 (Tas2r4).